Consider the following 145-residue polypeptide: Protein FimA (145 aa).

Belongs to the fimbrial protein family.

It localises to the fimbrium. The polypeptide is Protein FimA (fimA) (Bordetella pertussis).